Reading from the N-terminus, the 870-residue chain is A-kinase anchor protein 2 (870 aa).

Disordered regions lie at residues 14-43 (PGITSTPHSKDHSSPFYSPSHNGLLTDHHE) and 103-165 (IEKA…SSRD). Residue Ser122 is modified to Phosphoserine. Positions 133-151 (GHSTDQPQDMLGNSLQAPA) are enriched in polar residues. Ser152 is modified (phosphoserine). Over residues 152 to 161 (SPSSSTSSHC) the composition is skewed to low complexity. Lys174 participates in a covalent cross-link: Glycyl lysine isopeptide (Lys-Gly) (interchain with G-Cter in SUMO1); alternate. Lys174 participates in a covalent cross-link: Glycyl lysine isopeptide (Lys-Gly) (interchain with G-Cter in SUMO2); alternate. A coiled-coil region spans residues 213–307 (EEMIELEKER…QQQQLSTSQL (95 aa)). The tract at residues 233-324 (KNPGIAAKWW…EHLDSIEHTK (92 aa)) is disordered. Over residues 259–274 (LESHRKYKERKEKRAQ) the composition is skewed to basic and acidic residues. The span at 275–302 (QEQLQLQQQQQQQLQQLQQLQQQQQQQL) shows a compositional bias: low complexity. The segment covering 313 to 324 (AHEHLDSIEHTK) has biased composition (basic and acidic residues). Phosphoserine is present on Ser347. The tract at residues 409-436 (ESQSAGAGTGNAATQGKEGPYSEPSKRG) is disordered. Residues 410–424 (SQSAGAGTGNAATQG) show a composition bias toward low complexity. Residues Ser472, Ser476, and Ser528 each carry the phosphoserine modification. The span at 506–543 (FSMDNISDSGASNETPNALQENSLADFSLPQTPQTDNP) shows a compositional bias: polar residues. 2 disordered regions span residues 506 to 577 (FSMD…DPLE) and 595 to 688 (QVDK…RPEG). Thr537 is subject to Phosphothreonine. Residues 576-589 (LEYQAGLLVQNAIQ) are PKA-RII subunit binding domain. Over residues 595-608 (QVDKAEVHTSKEGS) the composition is skewed to basic and acidic residues. Ser641 bears the Phosphoserine mark. The segment covering 644–665 (QEKRDVLPKILPGEDKTLREKG) has biased composition (basic and acidic residues). Residues 720 to 755 (KLRSRKQRTLSMIEEEIRAAQEREEELKRQRQVRQS) are a coiled coil. Phosphoserine is present on residues Ser730, Ser758, Ser789, and Ser796. Positions 740-814 (QEREEELKRQ…EAAGAQRPKN (75 aa)) are disordered. Residues 755–774 (STPSPRAQNAPSLPSRTTCY) are compositionally biased toward polar residues.

It localises to the apical cell membrane. Binds to regulatory subunit (RII) of protein kinase A. May be involved in establishing polarity in signaling systems or in integrating PKA-RII isoforms with downstream effectors to capture, amplify and focus diffuse, trans-cellular signals carried by cAMP. Binds to and modulates the structure of the actin cytoskeleton. The chain is A-kinase anchor protein 2 from Rattus norvegicus (Rat).